The following is a 498-amino-acid chain: Glycerol kinase (498 aa).

Thr-12 provides a ligand contact to ADP. The ATP site is built by Thr-12, Thr-13, and Ser-14. Residue Thr-12 coordinates sn-glycerol 3-phosphate. ADP is bound at residue Arg-16. Residues Arg-82, Glu-83, Tyr-134, and Asp-244 each contribute to the sn-glycerol 3-phosphate site. Glycerol contacts are provided by Arg-82, Glu-83, Tyr-134, Asp-244, and Gln-245. ADP-binding residues include Thr-266 and Gly-310. ATP contacts are provided by Thr-266, Gly-310, Gln-314, and Gly-411. ADP-binding residues include Gly-411 and Asn-415.

It belongs to the FGGY kinase family.

It catalyses the reaction glycerol + ATP = sn-glycerol 3-phosphate + ADP + H(+). It functions in the pathway polyol metabolism; glycerol degradation via glycerol kinase pathway; sn-glycerol 3-phosphate from glycerol: step 1/1. With respect to regulation, inhibited by fructose 1,6-bisphosphate (FBP). Key enzyme in the regulation of glycerol uptake and metabolism. Catalyzes the phosphorylation of glycerol to yield sn-glycerol 3-phosphate. In Chloroflexus aurantiacus (strain ATCC 29366 / DSM 635 / J-10-fl), this protein is Glycerol kinase.